The primary structure comprises 148 residues: Macrodomain Ter protein (148 aa).

This sequence belongs to the MatP family. In terms of assembly, homodimer.

Its subcellular location is the cytoplasm. Required for spatial organization of the terminus region of the chromosome (Ter macrodomain) during the cell cycle. Prevents early segregation of duplicated Ter macrodomains during cell division. Binds specifically to matS, which is a 13 bp signature motif repeated within the Ter macrodomain. The chain is Macrodomain Ter protein from Photobacterium profundum (strain SS9).